We begin with the raw amino-acid sequence, 2625 residues long: Highly reducing polyketide synthase frbB (2625 aa).

Residues 1–10 show a composition bias toward basic and acidic residues; sequence MRNIDEHMSE. The tract at residues 1 to 25 is disordered; the sequence is MRNIDEHMSERATLQSSGGYGERDS. One can recognise a Ketosynthase family 3 (KS3) domain in the interval 27–449; it reads VEPIAIIGMS…GTNAHVILDR (423 aa). Catalysis depends on for beta-ketoacyl synthase activity residues C200, H334, and H375. The segment at 563-883 is malonyl-CoA:ACP transacylase (MAT) domain; it reads YVFSGQGAQY…DAASTLLTTI (321 aa). An N-terminal hotdog fold region spans residues 942-1080; the sequence is HELLGNMSTD…GRIRAVLDDS (139 aa). The segment at 942-1252 is dehydratase (DH) domain; that stretch reads HELLGNMSTD…GMILAKLPGG (311 aa). The region spanning 942–1255 is the PKS/mFAS DH domain; the sequence is HELLGNMSTD…LAKLPGGTSR (314 aa). The active-site Proton acceptor; for dehydratase activity is H974. Positions 1102-1255 are C-terminal hotdog fold; sequence VRFVSPSAFY…LAKLPGGTSR (154 aa). The active-site Proton donor; for dehydratase activity is D1167. The segment at 1490–1673 is methyltransferase (CMet) domain; sequence YHQIKAYIAE…GFVDTEPVFR (184 aa). The segment at 1907–2220 is enoyl reductase (ER) domain; the sequence is GLLETFHWKP…SGKHIGKVIL (314 aa). Residues 2261–2439 are ketoreductase (KR) domain; it reads AVYIVVGGLG…GYSINIGPVS (179 aa). Residues 2542 to 2619 form the Carrier domain; it reads GAEAAVLTAI…HLARLAAEES (78 aa). S2579 is modified (O-(pantetheine 4'-phosphoryl)serine).

It participates in antifungal biosynthesis. Highly reducing polyketide synthase; part of the gene cluster that mediates the biosynthesis of the antifungal antibiotic FR901469, an inhibitor of beta-1,3-glucansynthase, exerting antifungal activity against the pathogenes Candida albicans and Aspergillus fumigatus. FR901469 is a cyclic depsipeptide containing 12 amino acid residues and a fatty acid chain. The NRPS frbI contains 12 modules responsible for the formation of the depsipeptide backbone which is denoted as Acyl-Thr-Ala-Tyr-Val-4OHPro-Thr-Thr-3OHPro-threo3OHGln-Gly-Thr-Orn-OH (C71H116N14O23). The PKS frbB is probably involved in the production of the hydrocarbon chain, and the acyl-CoA ligase frbC might be involved in the transport of the chain to the peptide ptoduct of frbI. Because FR901469 contains 3 hydroxylated amino acid residues, the 3 oxygenases frbA, frbH, and frbJ might be participating in amino acid hydroxylation. As no thioesterase domains were detected in frbI or frbB, the thioesterases frbD and frbE may instead release and cyclize the products of the NRPS and PKS, respectively. This chain is Highly reducing polyketide synthase frbB, found in Dothideomycetidae sp. (strain 11243) (Fungal sp. (strain No.11243)).